A 144-amino-acid chain; its full sequence is D-aminoacyl-tRNA deacylase (144 aa).

Positions 136-137 match the Gly-cisPro motif, important for rejection of L-amino acids motif; it reads GP.

The protein belongs to the DTD family. As to quaternary structure, homodimer.

The protein localises to the cytoplasm. It catalyses the reaction glycyl-tRNA(Ala) + H2O = tRNA(Ala) + glycine + H(+). The catalysed reaction is a D-aminoacyl-tRNA + H2O = a tRNA + a D-alpha-amino acid + H(+). An aminoacyl-tRNA editing enzyme that deacylates mischarged D-aminoacyl-tRNAs. Also deacylates mischarged glycyl-tRNA(Ala), protecting cells against glycine mischarging by AlaRS. Acts via tRNA-based rather than protein-based catalysis; rejects L-amino acids rather than detecting D-amino acids in the active site. By recycling D-aminoacyl-tRNA to D-amino acids and free tRNA molecules, this enzyme counteracts the toxicity associated with the formation of D-aminoacyl-tRNA entities in vivo and helps enforce protein L-homochirality. This is D-aminoacyl-tRNA deacylase from Glaesserella parasuis serovar 5 (strain SH0165) (Haemophilus parasuis).